We begin with the raw amino-acid sequence, 148 residues long: Sec-independent protein translocase protein TatB (148 aa).

A helical transmembrane segment spans residues Phe2–Gly22. Basic and acidic residues-rich tracts occupy residues Val100 to Glu110 and Met128 to Thr148. Residues Val100–Thr148 are disordered.

It belongs to the TatB family. In terms of assembly, the Tat system comprises two distinct complexes: a TatABC complex, containing multiple copies of TatA, TatB and TatC subunits, and a separate TatA complex, containing only TatA subunits. Substrates initially bind to the TatABC complex, which probably triggers association of the separate TatA complex to form the active translocon.

The protein localises to the cell membrane. Its function is as follows. Part of the twin-arginine translocation (Tat) system that transports large folded proteins containing a characteristic twin-arginine motif in their signal peptide across membranes. Together with TatC, TatB is part of a receptor directly interacting with Tat signal peptides. TatB may form an oligomeric binding site that transiently accommodates folded Tat precursor proteins before their translocation. The protein is Sec-independent protein translocase protein TatB of Streptomyces avermitilis (strain ATCC 31267 / DSM 46492 / JCM 5070 / NBRC 14893 / NCIMB 12804 / NRRL 8165 / MA-4680).